A 166-amino-acid polypeptide reads, in one-letter code: Large ribosomal subunit protein uL10 (166 aa).

It belongs to the universal ribosomal protein uL10 family. Part of the ribosomal stalk of the 50S ribosomal subunit. The N-terminus interacts with L11 and the large rRNA to form the base of the stalk. The C-terminus forms an elongated spine to which L12 dimers bind in a sequential fashion forming a multimeric L10(L12)X complex.

In terms of biological role, forms part of the ribosomal stalk, playing a central role in the interaction of the ribosome with GTP-bound translation factors. This chain is Large ribosomal subunit protein uL10, found in Staphylococcus aureus (strain JH1).